Consider the following 422-residue polypeptide: Biofilm regulator 1 (422 aa).

2 stretches are compositionally biased toward low complexity: residues 1–19 (MSSSSSLSSSTTTATTTSA) and 36–45 (SGGSNNGNGS). Disordered stretches follow at residues 1–86 (MSSS…KCPP) and 116–207 (RLSS…PSHP). Over residues 46–61 (ALKSQISPRLSDTSRI) the composition is skewed to polar residues. Composition is skewed to low complexity over residues 69–81 (TSGSSTPTSSSTP) and 120–143 (PTLPVKVQPQQQPQLPPASSLSPV). A compositionally biased stretch (polar residues) spans 146 to 159 (VINTPPQQPQSVSA). The segment covering 160–194 (STSPNTQYQYYQYQQQSSPIQQQQQQQQATPAATP) has biased composition (low complexity). A compositionally biased stretch (polar residues) spans 195–205 (TVMQMAQNQPS). The GATA-type zinc finger occupies 282–307 (CHRCGTTETPEWRRGPKGVRTLCNAC).

As to quaternary structure, interacts with HDA1.

Its subcellular location is the nucleus. Transcription factor required for hyphal growth, biofilm formation, and virulence. Promotes formation of both conventional and pheromone-stimulated biofilms. Binds and recruits HDA1 to promoters of hypha-specific genes in a rapamycin-dependent manner. Involved in the switch between two heritable states, the white and opaque states. These two cell types differ in many characteristics, including cell structure, mating competence, and virulence. Each state is heritable for many generations, and switching between states occurs stochastically at low frequency. The sequence is that of Biofilm regulator 1 (BRG1) from Candida albicans (strain SC5314 / ATCC MYA-2876) (Yeast).